The following is a 303-amino-acid chain: Glycine--tRNA ligase alpha subunit (303 aa).

The protein belongs to the class-II aminoacyl-tRNA synthetase family. In terms of assembly, tetramer of two alpha and two beta subunits.

The protein resides in the cytoplasm. The enzyme catalyses tRNA(Gly) + glycine + ATP = glycyl-tRNA(Gly) + AMP + diphosphate. In Streptococcus equi subsp. zooepidemicus (strain H70), this protein is Glycine--tRNA ligase alpha subunit.